Reading from the N-terminus, the 975-residue chain is Nesprin-3 (975 aa).

Over 1 to 925 (MTQQPQDDFD…LGSLFRRACC (925 aa)) the chain is Cytoplasmic. The stretch at 220-325 (REHEEYQAGV…WEEEEERLRG (106 aa)) is one Spectrin 1 repeat. Positions 617 to 645 (NHQHKMDQLSSDFQALQRSLEDLVDRCRQ) form a coiled coil. The stretch at 647–740 (VQEHCTFSHQ…RELAESWRAL (94 aa)) is one Spectrin 2 repeat. The 59-residue stretch at 917–975 (GSLFRRACCVALPLQLLLLLFLLLLFLLPIREEDRSCTLANNFARSFTLMLRYNGPPPT) folds into the KASH domain. The chain crosses the membrane as a helical; Anchor for type IV membrane protein span at residues 926–946 (VALPLQLLLLLFLLLLFLLPI). The Perinuclear space portion of the chain corresponds to 947 to 975 (REEDRSCTLANNFARSFTLMLRYNGPPPT).

The protein belongs to the nesprin family. As to quaternary structure, core component of LINC complexes which are composed of inner nuclear membrane SUN domain-containing proteins coupled to outer nuclear membrane KASH domain-containing nesprins. SUN and KASH domain-containing proteins seem to bind each other promiscuously; however, differentially expression of LINC complex constituents can give rise to specific assemblies. Interacts with SUN1 and SUN2; probably forming respective LINC complexes. Interacts with PLEC (via actin-binding domain). Interacts with DST. Interacts with SYNE1 via spectrin repeats. Interacts (via KASH domain) with TOR1A (ATP-bound); the interaction is required for SYNE3 nuclear envelope localization. The disulfid bond with SUN1 or SUN2 is required for stability of the respective LINC complex under tensile forces. As to expression, expressed in aortic endothelial cells (at protein level).

The protein resides in the nucleus outer membrane. It localises to the nucleus envelope. It is found in the rough endoplasmic reticulum. In terms of biological role, as a component of the LINC (LInker of Nucleoskeleton and Cytoskeleton) complex involved in the connection between the nuclear lamina and the cytoskeleton. The nucleocytoplasmic interactions established by the LINC complex play an important role in the transmission of mechanical forces across the nuclear envelope and in nuclear movement and positioning. Probable anchoring protein which tethers the nucleus to the cytoskeleton by binding PLEC which can associate with the intermediate filament system. Plays a role in the regulation of aortic epithelial cell morphology, and is required for flow-induced centrosome polarization and directional migration in aortic endothelial cells. This Homo sapiens (Human) protein is Nesprin-3.